The sequence spans 293 residues: tRNA pseudouridine synthase B (293 aa).

The active-site Nucleophile is aspartate 39.

It belongs to the pseudouridine synthase TruB family. Type 1 subfamily.

It carries out the reaction uridine(55) in tRNA = pseudouridine(55) in tRNA. In terms of biological role, responsible for synthesis of pseudouridine from uracil-55 in the psi GC loop of transfer RNAs. The sequence is that of tRNA pseudouridine synthase B from Thermobifida fusca (strain YX).